A 618-amino-acid chain; its full sequence is tRNA 5-methylaminomethyl-2-thiouridine biosynthesis bifunctional protein MnmC (618 aa).

Residues 1-231 form a tRNA (mnm(5)s(2)U34)-methyltransferase region; that stretch reads MLQTYAPIDF…KRHMLSAVYE (231 aa). The FAD-dependent cmnm(5)s(2)U34 oxidoreductase stretch occupies residues 256–618; it reads IGAGIAGATT…KDIIRGHLNN (363 aa).

This sequence in the N-terminal section; belongs to the methyltransferase superfamily. tRNA (mnm(5)s(2)U34)-methyltransferase family. It in the C-terminal section; belongs to the DAO family. It depends on FAD as a cofactor.

The protein localises to the cytoplasm. The catalysed reaction is 5-aminomethyl-2-thiouridine(34) in tRNA + S-adenosyl-L-methionine = 5-methylaminomethyl-2-thiouridine(34) in tRNA + S-adenosyl-L-homocysteine + H(+). Functionally, catalyzes the last two steps in the biosynthesis of 5-methylaminomethyl-2-thiouridine (mnm(5)s(2)U) at the wobble position (U34) in tRNA. Catalyzes the FAD-dependent demodification of cmnm(5)s(2)U34 to nm(5)s(2)U34, followed by the transfer of a methyl group from S-adenosyl-L-methionine to nm(5)s(2)U34, to form mnm(5)s(2)U34. This chain is tRNA 5-methylaminomethyl-2-thiouridine biosynthesis bifunctional protein MnmC, found in Dichelobacter nodosus (strain VCS1703A).